A 511-amino-acid polypeptide reads, in one-letter code: Maturase K (511 aa).

This sequence belongs to the intron maturase 2 family. MatK subfamily.

The protein localises to the plastid. The protein resides in the chloroplast. In terms of biological role, usually encoded in the trnK tRNA gene intron. Probably assists in splicing its own and other chloroplast group II introns. The polypeptide is Maturase K (Hordeum bulbosum (Bulbous barley)).